The following is a 345-amino-acid chain: Protein RecA (345 aa).

ATP is bound at residue 65-72 (GPESSGKT). Over residues 326–336 (EKFQPAEAARE) the composition is skewed to basic and acidic residues. The disordered stretch occupies residues 326–345 (EKFQPAEAAREEGDDEGEDE).

The protein belongs to the RecA family.

The protein localises to the cytoplasm. Functionally, can catalyze the hydrolysis of ATP in the presence of single-stranded DNA, the ATP-dependent uptake of single-stranded DNA by duplex DNA, and the ATP-dependent hybridization of homologous single-stranded DNAs. It interacts with LexA causing its activation and leading to its autocatalytic cleavage. This Stenotrophomonas maltophilia (strain K279a) protein is Protein RecA.